An 86-amino-acid polypeptide reads, in one-letter code: Antimicrobial peptide 2 (86 aa).

Residues 1 to 25 (MVNMKCVALIVIVMMAFMMVDPSMG) form the signal peptide. Disulfide bonds link Cys-29–Cys-40, Cys-34–Cys-46, and Cys-39–Cys-53. The Chitin-binding type-1 domain maps to 29–53 (CVRGRCPSGMCCSQFGYCGKGPKYC). Positions 56-86 (ASTTVDHQADVAATKTAKNPTDAKLAGAGSP) are cleaved as a propeptide — removed in mature form.

Homodimer.

Functionally, chitin-binding protein with a defensive function against numerous chitin containing fungal pathogens. It is also a potent inhibitor of Gram-positive bacteria. This Amaranthus caudatus (Love-lies-bleeding) protein is Antimicrobial peptide 2.